Reading from the N-terminus, the 517-residue chain is MRILLIAVLFLLMPKSNAEIPGCDFFDTVDISKAPRFSNGSYLYEGLLIPAHLTAEYDYKLLADDSKEKVASHVRGCACHLRPCIRFCCPQYQKMQKSKCYGDMSEDELNKHDPFVNVTLSDGSVVRRHFKEDLIVQSDLAKPGCPRMYFLNHELPGNEFTLFENGSLLRHWDKVELSKREYCVQHLSFKDDSIRIAPHFCPLSSEHSRTWKTVAIVISLICIILTISVYLYVEKLRNLHGKCFICYLASLFLGYFFLVLNVWKYSSGFCVTAGFLGYFSVMAAFFWLSVIGIHLRIKFSLASNCLHRLLPENPFRAYNLYAWGIPLIMTAITYTADQVVKNEKLRPRVGVGKNCWIYTGDMTVMIYFYGPMLLLIAFNIIMFVLSAIYIYNIKKNVKGLVHKQQTNQQINDQQMFAIFLRLFILMGLSWSFEILSFLLTKQQAWARALMVADYFNWSQGTIIFVLFILKPSILKLIIAGGRQNLPGSHHNSRSKAARYNSTHTACEGSIADPNAYC.

The signal sequence occupies residues Met1–Ala18. Residues Glu19–Lys212 lie on the Extracellular side of the membrane. Cystine bridges form between Cys23-Cys77, Cys79-Cys84, Cys88-Cys183, Cys89-Cys100, and Cys145-Cys201. Residue Asn39 is glycosylated (N-linked (GlcNAc...) asparagine). N-linked (GlcNAc...) asparagine glycans are attached at residues Asn117 and Asn165. The helical transmembrane segment at Thr213–Val233 threads the bilayer. Topologically, residues Glu234–Lys242 are cytoplasmic. Residues Cys243–Trp263 form a helical membrane-spanning segment. The Extracellular portion of the chain corresponds to Lys264–Thr272. The chain crosses the membrane as a helical span at residues Ala273–Ile293. The Cytoplasmic segment spans residues His294–Asn319. The chain crosses the membrane as a helical span at residues Leu320–Val340. Topologically, residues Lys341 to Thr363 are extracellular. A helical membrane pass occupies residues Val364 to Val384. Over Leu385–Gln414 the chain is Cytoplasmic. A helical membrane pass occupies residues Met415–Leu435. Residues Ser436–Gln459 are Extracellular-facing. N-linked (GlcNAc...) asparagine glycosylation occurs at Asn456. The chain crosses the membrane as a helical span at residues Gly460–Gly480. Residues Gly481 to Cys517 lie on the Cytoplasmic side of the membrane.

Belongs to the G-protein coupled receptor 2 family. Mth subfamily.

The protein resides in the cell membrane. This Drosophila melanogaster (Fruit fly) protein is Probable G-protein coupled receptor Mth-like 4 (mthl4).